The primary structure comprises 145 residues: Aminoglycoside N(6')-acetyltransferase type 1 (145 aa).

Residues 1-145 (MDIRQMNKTH…ERVIFYRKRC (145 aa)) enclose the N-acetyltransferase domain. Residues Trp-22, His-25, Tyr-66, and Glu-79 each coordinate substrate. Acetyl-CoA is bound by residues 81–83 (IFV) and 89–94 (QRGVAK). A substrate-binding site is contributed by Asp-115. Asn-120 is an acetyl-CoA binding site. Glu-136 is a binding site for substrate.

Homodimer.

It catalyses the reaction kanamycin B + acetyl-CoA = N(6')-acetylkanamycin B + CoA + H(+). Its function is as follows. Catalyzes the transfer of an acetyl group from acetyl-CoA to the 6'-amino group of aminoglycoside molecules conferring resistance to antibiotics containing the purpurosamine ring including amikacin, tobramycin, dibekacin and ribostamycin. Able to acetylate eukaryotic histone proteins. The polypeptide is Aminoglycoside N(6')-acetyltransferase type 1 (Salmonella enteritidis).